A 557-amino-acid polypeptide reads, in one-letter code: Dihydroxy-acid dehydratase (557 aa).

A Mg(2+)-binding site is contributed by Asp-78. Cys-119 provides a ligand contact to [2Fe-2S] cluster. Mg(2+)-binding residues include Asp-120 and Lys-121. Lys-121 is subject to N6-carboxylysine. Cys-194 serves as a coordination point for [2Fe-2S] cluster. Glu-446 lines the Mg(2+) pocket. The active-site Proton acceptor is Ser-472.

It belongs to the IlvD/Edd family. In terms of assembly, homodimer. It depends on [2Fe-2S] cluster as a cofactor. Mg(2+) is required as a cofactor.

The catalysed reaction is (2R)-2,3-dihydroxy-3-methylbutanoate = 3-methyl-2-oxobutanoate + H2O. It carries out the reaction (2R,3R)-2,3-dihydroxy-3-methylpentanoate = (S)-3-methyl-2-oxopentanoate + H2O. The protein operates within amino-acid biosynthesis; L-isoleucine biosynthesis; L-isoleucine from 2-oxobutanoate: step 3/4. It functions in the pathway amino-acid biosynthesis; L-valine biosynthesis; L-valine from pyruvate: step 3/4. Functionally, functions in the biosynthesis of branched-chain amino acids. Catalyzes the dehydration of (2R,3R)-2,3-dihydroxy-3-methylpentanoate (2,3-dihydroxy-3-methylvalerate) into 2-oxo-3-methylpentanoate (2-oxo-3-methylvalerate) and of (2R)-2,3-dihydroxy-3-methylbutanoate (2,3-dihydroxyisovalerate) into 2-oxo-3-methylbutanoate (2-oxoisovalerate), the penultimate precursor to L-isoleucine and L-valine, respectively. The protein is Dihydroxy-acid dehydratase of Desulfosudis oleivorans (strain DSM 6200 / JCM 39069 / Hxd3) (Desulfococcus oleovorans).